The primary structure comprises 523 residues: ATP synthase subunit alpha (523 aa).

179-186 contacts ATP; the sequence is GDRQTGKT.

This sequence belongs to the ATPase alpha/beta chains family. F-type ATPases have 2 components, CF(1) - the catalytic core - and CF(0) - the membrane proton channel. CF(1) has five subunits: alpha(3), beta(3), gamma(1), delta(1), epsilon(1). CF(0) has three main subunits: a(1), b(2) and c(9-12). The alpha and beta chains form an alternating ring which encloses part of the gamma chain. CF(1) is attached to CF(0) by a central stalk formed by the gamma and epsilon chains, while a peripheral stalk is formed by the delta and b chains.

Its subcellular location is the cell inner membrane. The catalysed reaction is ATP + H2O + 4 H(+)(in) = ADP + phosphate + 5 H(+)(out). Functionally, produces ATP from ADP in the presence of a proton gradient across the membrane. The alpha chain is a regulatory subunit. This is ATP synthase subunit alpha from Vibrio parahaemolyticus serotype O3:K6 (strain RIMD 2210633).